Here is a 367-residue protein sequence, read N- to C-terminus: Aflatoxin B1 aldehyde reductase member 2 (367 aa).

Residues methionine 1–proline 46 constitute a mitochondrion transit peptide. Residues proline 27–proline 46 form a disordered region. Serine 40 carries the phosphoserine modification. A Phosphothreonine modification is found at threonine 48. Aspartate 80 lines the NADP(+) pocket. The Proton donor role is filled by tyrosine 85. Lysine 136 bears the N6-acetyllysine mark. Position 149 (histidine 149) interacts with substrate. Residues serine 179–asparagine 180, glutamine 205, asparagine 234–lysine 244, and arginine 258 each bind NADP(+). An N6-succinyllysine modification is found at lysine 244. Phosphoserine is present on serine 263. Residues tyrosine 268 and arginine 271 each contribute to the substrate site. Position 326–334 (serine 326–asparagine 334) interacts with NADP(+). Residue arginine 367 participates in substrate binding.

Belongs to the aldo/keto reductase family. Aldo/keto reductase 2 subfamily. In terms of assembly, homodimer. Heterodimer with AKR7A1.

The protein localises to the mitochondrion. Its subcellular location is the golgi apparatus. It localises to the golgi stack. The protein resides in the cytoplasm. It catalyses the reaction 4-hydroxybutanoate + NADP(+) = succinate semialdehyde + NADPH + H(+). In terms of biological role, catalyzes the NADPH-dependent reduction of succinic semialdehyde to gamma-hydroxybutyrate. May have an important role in producing the neuromodulator gamma-hydroxybutyrate (GHB). Has broad substrate specificity. Can reduce the dialdehyde protein-binding form of aflatoxin B1 (AFB1) to the non-binding AFB1 dialcohol. Acts as a 2-carboxybenzaldehyde reductase. The protein is Aflatoxin B1 aldehyde reductase member 2 (Akr7a2) of Rattus norvegicus (Rat).